The primary structure comprises 393 residues: Phosphoglycerate kinase (393 aa).

Substrate-binding positions include 21–23 (DLN), R36, 59–62 (HLGR), R114, and R147. ATP-binding positions include K198, E314, and 340–343 (GGDT).

The protein belongs to the phosphoglycerate kinase family. As to quaternary structure, monomer.

It localises to the cytoplasm. It carries out the reaction (2R)-3-phosphoglycerate + ATP = (2R)-3-phospho-glyceroyl phosphate + ADP. Its pathway is carbohydrate degradation; glycolysis; pyruvate from D-glyceraldehyde 3-phosphate: step 2/5. The sequence is that of Phosphoglycerate kinase from Buchnera aphidicola subsp. Baizongia pistaciae (strain Bp).